The chain runs to 731 residues: Polyribonucleotide nucleotidyltransferase (731 aa).

Residues Asp488 and Asp494 each contribute to the Mg(2+) site. The region spanning 555-614 is the KH domain; the sequence is PRIEVINIAVDKIRDVIGSGGKVIREIVEQTGAKINIEDDGTIKIASADAKTIEAAKRWI. The region spanning 624–692 is the S1 motif domain; sequence GAIYQGTVVK…ERGKVRLSMK (69 aa). The segment at 693-731 is disordered; the sequence is AVDQKTGKEMTDDKSVKEEKCMDEKKQPENKRRRKKKEE. Over residues 694-722 the composition is skewed to basic and acidic residues; that stretch reads VDQKTGKEMTDDKSVKEEKCMDEKKQPEN.

This sequence belongs to the polyribonucleotide nucleotidyltransferase family. Requires Mg(2+) as cofactor.

Its subcellular location is the cytoplasm. It catalyses the reaction RNA(n+1) + phosphate = RNA(n) + a ribonucleoside 5'-diphosphate. In terms of biological role, involved in mRNA degradation. Catalyzes the phosphorolysis of single-stranded polyribonucleotides processively in the 3'- to 5'-direction. The protein is Polyribonucleotide nucleotidyltransferase of Bartonella tribocorum (strain CIP 105476 / IBS 506).